Here is a 310-residue protein sequence, read N- to C-terminus: Homoserine kinase (310 aa).

Residue 91-101 (PIGSGLGSSAC) participates in ATP binding.

The protein belongs to the GHMP kinase family. Homoserine kinase subfamily.

It is found in the cytoplasm. It catalyses the reaction L-homoserine + ATP = O-phospho-L-homoserine + ADP + H(+). The protein operates within amino-acid biosynthesis; L-threonine biosynthesis; L-threonine from L-aspartate: step 4/5. In terms of biological role, catalyzes the ATP-dependent phosphorylation of L-homoserine to L-homoserine phosphate. This is Homoserine kinase from Escherichia coli O6:K15:H31 (strain 536 / UPEC).